A 404-amino-acid polypeptide reads, in one-letter code: Caspase-1 (404 aa).

In terms of domain architecture, CARD spans 1-91 (MADKVLKEKR…HLAGVLELST (91 aa)). The propeptide occupies 1 to 119 (MADKVLKEKR…PFPAPQTVQD (119 aa)). The interval 111-132 (FPAPQTVQDNPVKPASSEPRGS) is disordered. Catalysis depends on residues His-237 and Cys-285. Positions 298–316 (SVGPSGNSSLLAAEDFEYD) are excised as a propeptide. Ser-302 carries the phosphoserine modification.

The protein belongs to the peptidase C14A family. Heterotetramer that consists of two anti-parallel arranged heterodimers, each one formed by a 20 kDa (Caspase-1 subunit p20) and a 10 kDa (Caspase-1 subunit p10) subunit. May be a component of the inflammasome, a protein complex which also includes PYCARD, CARD8 and NLRP2 and whose function would be the activation of pro-inflammatory caspases. Component of the AIM2 PANoptosome complex, a multiprotein complex that drives inflammatory cell death (PANoptosis). Both the p10 and p20 subunits interact with MEFV. Interacts with CARD17P/INCA and CARD18. Interacts with SERPINB1; this interaction regulates CASP1 activity. In terms of assembly, heterotetramer that consists of two anti-parallel arranged heterodimers, each one formed by a 20 kDa (Caspase-1 subunit p20) and a 10 kDa (Caspase-1 subunit p10) subunit. In terms of processing, the two subunits are derived from the precursor sequence by an autocatalytic mechanism. Post-translationally, ubiquitinated via 'Lys-11'-linked polyubiquitination. Deubiquitinated by USP8.

The protein localises to the cytoplasm. The protein resides in the cell membrane. The enzyme catalyses Strict requirement for an Asp residue at position P1 and has a preferred cleavage sequence of Tyr-Val-Ala-Asp-|-.. Functionally, thiol protease involved in a variety of inflammatory processes by proteolytically cleaving other proteins, such as the precursors of the inflammatory cytokines interleukin-1 beta (IL1B) and interleukin 18 (IL18) as well as the pyroptosis inducer Gasdermin-D (GSDMD), into active mature peptides. Plays a key role in cell immunity as an inflammatory response initiator: once activated through formation of an inflammasome complex, it initiates a pro-inflammatory response through the cleavage of the two inflammatory cytokines IL1B and IL18, releasing the mature cytokines which are involved in a variety of inflammatory processes. Cleaves a tetrapeptide after an Asp residue at position P1. Also initiates pyroptosis, a programmed lytic cell death pathway, through cleavage of GSDMD. In contrast to cleavage of interleukin IL1B, recognition and cleavage of GSDMD is not strictly dependent on the consensus cleavage site but depends on an exosite interface on CASP1 that recognizes and binds the Gasdermin-D, C-terminal (GSDMD-CT) part. Cleaves and activates CASP7 in response to bacterial infection, promoting plasma membrane repair. Upon inflammasome activation, during DNA virus infection but not RNA virus challenge, controls antiviral immunity through the cleavage of CGAS, rendering it inactive. In apoptotic cells, cleaves SPHK2 which is released from cells and remains enzymatically active extracellularly. The chain is Caspase-1 (CASP1) from Sus scrofa (Pig).